Here is a 194-residue protein sequence, read N- to C-terminus: Orotate phosphoribosyltransferase (194 aa).

5-phospho-alpha-D-ribose 1-diphosphate contacts are provided by residues R102, K103, K106, H108, and 129-137 (EDVVTTGGS). Orotate contacts are provided by T133 and R161.

Belongs to the purine/pyrimidine phosphoribosyltransferase family. PyrE subfamily. In terms of assembly, homodimer. Mg(2+) is required as a cofactor.

It carries out the reaction orotidine 5'-phosphate + diphosphate = orotate + 5-phospho-alpha-D-ribose 1-diphosphate. It participates in pyrimidine metabolism; UMP biosynthesis via de novo pathway; UMP from orotate: step 1/2. Functionally, catalyzes the transfer of a ribosyl phosphate group from 5-phosphoribose 1-diphosphate to orotate, leading to the formation of orotidine monophosphate (OMP). The polypeptide is Orotate phosphoribosyltransferase (Prochlorococcus marinus (strain MIT 9211)).